A 736-amino-acid chain; its full sequence is Epithelial splicing regulatory protein 2 (736 aa).

RRM domains lie at 224–301, 325–405, and 659–736; these read TVIR…KATG, MIIR…RSTA, and ALVR…ACCE.

Belongs to the ESRP family.

The protein resides in the nucleus. In terms of biological role, mRNA splicing factor that regulates the formation of epithelial cell-specific isoforms. Specifically regulates the expression of FGFR2-IIIb, an epithelial cell-specific isoform of fgfr2. Acts by directly binding specific sequences in mRNAs. Binds the GU-rich sequence motifs in the ISE/ISS-3, a cis-element regulatory region present in the mRNA of fgfr2. This chain is Epithelial splicing regulatory protein 2 (esrp2), found in Danio rerio (Zebrafish).